Reading from the N-terminus, the 20-residue chain is Apidaecin 2+ (20 aa).

Positions 1 to 13 (GKPNKPRPAPIKP) are enriched in pro residues. Positions 1–20 (GKPNKPRPAPIKPRPPHPRL) are disordered.

The protein localises to the secreted. Functionally, antimicrobial peptide active against many Gram-negative enterobacterial and plant-associated bacterial species. Not active against other bacterial species like H.pylori, P.mirabilis, B.pertussis or N.gonorrhoeae. The polypeptide is Apidaecin 2+ (Pimpla disparis (Parasitic wasp)).